A 521-amino-acid chain; its full sequence is Spermidine transporter DUR31 (521 aa).

Residues 11-31 traverse the membrane as a helical segment; sequence AIIYLSYAFMLATGLFLAWKF. N41 carries N-linked (GlcNAc...) asparagine glycosylation. Transmembrane regions (helical) follow at residues 47 to 67, 79 to 99, 117 to 137, 156 to 176, 187 to 207, 227 to 247, 264 to 284, 310 to 330, 354 to 374, 377 to 397, 406 to 426, and 453 to 473; these read IPLA…TTYA, LVYT…GPVI, FGMV…FLFM, ALGA…FGGF, GVCV…YIEI, LVYI…GFWL, IAAF…FLAV, WLVA…FDSL, IMLI…ADNI, IYLI…LGLA, GFDV…FGTV, and FGAF…SAAL.

The protein belongs to the sodium:solute symporter (SSF) (TC 2.A.21) family.

It localises to the membrane. It catalyses the reaction spermidine(in) = spermidine(out). In terms of biological role, spermidine transporter that is also used by salivary gland-secreted histatin 5 (Hst 5) to enter into candidal cells. A major component of host nonimmune defense systems is salivary histatins, a family of small (3-4 kDa), histidine-rich, cationic proteins secreted by major salivary glands in humans and higher primates. Hst 5 is the most potent of the 12 histatin family members and has fungicidal activity against blastoconidial and filamentous forms of Candida albicans. DUR31 only functions under high concentrations of Hst 5. Hst 5 cojugates to spermidine to be uptaken by DUR31. This Candida albicans (strain SC5314 / ATCC MYA-2876) (Yeast) protein is Spermidine transporter DUR31.